The following is a 544-amino-acid chain: uncharacterized protein (544 aa).

The N-terminal stretch at 1–22 (MYFSQNAIILVMLMFVISAVFY) is a signal peptide.

This is an uncharacterized protein from Methanocaldococcus jannaschii (strain ATCC 43067 / DSM 2661 / JAL-1 / JCM 10045 / NBRC 100440) (Methanococcus jannaschii).